Here is a 304-residue protein sequence, read N- to C-terminus: MAITASMVAELRAKTDAPMMECKKALTEADGNFEKAEEILRVKLGNKAGKAASRVTAEGVIAYHSEGGIGALVEINCETDFVTKNDSFLAFTKAVAEGIVKNNPADVDAIGAMALSLDGFGPTVEDVRKGLIGKIGENMSVRRFKRFAGSKLASYLHGTRIGVVVEFDGDETAAKDVAMHVAAMKPVSLSSADVPADLVAKERSVAAAKAAEDAAKAQAEGKPVQSAEIVAKRIDGGVQKYLKEVSLYNQSFVKNDKQTVEQMLKERATTVKSFTLYVVGEGIEKKADDFAAEVAAQIAAAKAA.

Positions 79–82 (TDFV) are involved in Mg(2+) ion dislocation from EF-Tu.

The protein belongs to the EF-Ts family.

The protein resides in the cytoplasm. Functionally, associates with the EF-Tu.GDP complex and induces the exchange of GDP to GTP. It remains bound to the aminoacyl-tRNA.EF-Tu.GTP complex up to the GTP hydrolysis stage on the ribosome. In Polaromonas sp. (strain JS666 / ATCC BAA-500), this protein is Elongation factor Ts.